A 604-amino-acid polypeptide reads, in one-letter code: Beta-alanine transporter (604 aa).

Topologically, residues 1 to 23 (MDFDEVLREVGSFGLYQKVIICS) are cytoplasmic. Residues 24–44 (VLLPAALPCAFHAYSQLFIAA) form a helical membrane-spanning segment. Topologically, residues 45 to 151 (TPQHFCRVPE…QEWNLVCDRS (107 aa)) are extracellular. Asn68 and Asn88 each carry an N-linked (GlcNAc...) asparagine glycan. A helical membrane pass occupies residues 152-172 (FLVTLALVVFGVGGLLGNYVF). Topologically, residues 173 to 182 (GYLVDLWGRR) are cytoplasmic. The helical transmembrane segment at 183-203 (PSFYAYLLLEIIACAASAFAW) threads the bilayer. Residues 204–212 (NYYTWLGLR) lie on the Extracellular side of the membrane. The helical transmembrane segment at 213 to 233 (FVVGLTVPAILASPYVLAIEL) threads the bilayer. The Cytoplasmic portion of the chain corresponds to 234–243 (VGPERRVFCT). Residues 244–264 (IVSNIAYSLGLVVLAGVIYIV) traverse the membrane as a helical segment. Residues 265–268 (RDWR) are Extracellular-facing. Residues 269–289 (ELSLAVSMPLLMLFSCFFVLP) form a helical membrane-spanning segment. Over 290 to 362 (ESPRWLMAVG…FRGPNMRRKT (73 aa)) the chain is Cytoplasmic. The chain crosses the membrane as a helical span at residues 363–383 (LIITLIWFANTSVYVGLSYYA). The Extracellular segment spans residues 384 to 390 (PALGGDE). Residues 391–411 (IWNFFLAGAVELPTYLLLWPG) form a helical membrane-spanning segment. The Cytoplasmic portion of the chain corresponds to 412-418 (LSYFGRR). Residues 419–439 (WILFISMLVGGVACVATFLYP) traverse the membrane as a helical segment. At 440-442 (DIT) the chain is on the extracellular side. Residues 443-463 (LLLYCVGKMGISSSFVVLPLM) traverse the membrane as a helical segment. Topologically, residues 464-473 (ASELYPTVVR) are cytoplasmic. A helical membrane pass occupies residues 474–494 (GLGMSFSSVISMVGPIVIPMI). The Extracellular portion of the chain corresponds to 495–501 (NHMGQQM). A helical transmembrane segment spans residues 502 to 522 (LVLPLIVMGALLILGGFASLL). Topologically, residues 523 to 604 (LPETRNRNLP…SICKNEMRTL (82 aa)) are cytoplasmic.

The protein belongs to the major facilitator (TC 2.A.1) superfamily. Organic cation transporter (TC 2.A.1.19) family. Expressed in the head and predominantly in the retinal pigment cells of the compound eye.

Its subcellular location is the cell membrane. Its function is as follows. Beta-alanine transporter required for the uptake of beta-alanine by the glia. Required for the recycling process of the neurotransmitter histamine in photoreceptor neurons of the compound eye and therefore for photoreceptor synaptic transmission. Following histamine release from photoreceptors and its uptake by glia, histamine is conjugated to beta-alanine by e/Ebony to form the inactive metabolite, carcinine. The protein is Beta-alanine transporter of Drosophila melanogaster (Fruit fly).